A 139-amino-acid polypeptide reads, in one-letter code: MAQVKSLAQSLYPCSSQRLEHQMKLQILKNSSVTCNDGTPAGYYIKESRGSRRWLVFLEGGWYCFSKHTCDSRYESMRRLMSSSNWPPTRTGTGILSPQPEENPHWWNANTVFVPYCSSDVWSGSTPKTDQRGHQGALN.

Belongs to the pectinacetylesterase family. Notum subfamily.

Functionally, probable inactive palmitoleoyl-protein carboxylesterase. This is Inactive palmitoleoyl-protein carboxylesterase notum1b from Danio rerio (Zebrafish).